The sequence spans 213 residues: Riboflavin/roseoflavin transporter RibM (213 aa).

A run of 5 helical transmembrane segments spans residues 15–35 (HIIW…ALGF), 38–58 (SLWT…AFYG), 107–129 (IAAA…SLSW), 136–158 (YIFV…FWFA), and 171–193 (FANG…LWGM).

This sequence belongs to the nicotinamide ribonucleoside (NR) uptake permease (TC 4.B.1) family.

Its subcellular location is the cell membrane. In terms of biological role, transports riboflavin and roseoflavin. Can also transport FMN and FAD. May confer roseoflavin resistance to S.davawensis, which naturally produces this antibiotic during stationary growth phase. This Streptomyces davaonensis (strain DSM 101723 / JCM 4913 / KCC S-0913 / 768) protein is Riboflavin/roseoflavin transporter RibM.